We begin with the raw amino-acid sequence, 395 residues long: Selection and upkeep of intraepithelial T-cells protein 7 (395 aa).

The N-terminal stretch at 1–25 (MMKPEFFCFSGFCVYFLFLQVVVSS) is a signal peptide. Residues 26-141 (EKLRVTTPTR…DAAIMNLNVT (116 aa)) enclose the Ig-like V-type domain. Topologically, residues 26-248 (EKLRVTTPTR…FNRDRIWMES (223 aa)) are extracellular. C49 and C123 form a disulfide bridge. N-linked (GlcNAc...) asparagine glycosylation is found at N92 and N139. The 92-residue stretch at 142–233 (AVGLETEIHV…TGEEKQTSII (92 aa)) folds into the Ig-like C1-type domain. Cysteines 163 and 217 form a disulfide. Residues 249 to 269 (LASIVWIMLSVYILYIICFYW) form a helical membrane-spanning segment. Topologically, residues 270 to 287 (RTGCASGCLSKCFCVVTS) are cytoplasmic. Residues 288 to 308 (WPVQIVHLLFCTGTFFAIYLP) form a helical membrane-spanning segment. The Extracellular segment spans residues 309-329 (HRSRVSLSDPQFPLYNNWITE). Residues 330 to 350 (LLFVILFLTICFALPIILLFI) traverse the membrane as a helical segment. Topologically, residues 351 to 395 (QFQFTSLTKWEKNKDGIMDQPRLGKAHETSSLYRKKTGKSWEQEK) are cytoplasmic. The interval 371–395 (PRLGKAHETSSLYRKKTGKSWEQEK) is disordered.

The protein belongs to the SKINT family. As to expression, expressed in skin, thymus, testis and, to a lower extent, bladder.

Its subcellular location is the membrane. In terms of biological role, may act by engaging a cell surface molecule on immature T-cells in the embryonic thymus. The polypeptide is Selection and upkeep of intraepithelial T-cells protein 7 (Skint7) (Mus musculus (Mouse)).